Consider the following 101-residue polypeptide: Small ribosomal subunit protein uS10 (101 aa).

The protein belongs to the universal ribosomal protein uS10 family. In terms of assembly, part of the 30S ribosomal subunit.

Functionally, involved in the binding of tRNA to the ribosomes. In Parabacteroides distasonis (strain ATCC 8503 / DSM 20701 / CIP 104284 / JCM 5825 / NCTC 11152), this protein is Small ribosomal subunit protein uS10.